Reading from the N-terminus, the 198-residue chain is V-type ATP synthase subunit E (198 aa).

The protein belongs to the V-ATPase E subunit family.

Produces ATP from ADP in the presence of a proton gradient across the membrane. This Clostridium perfringens (strain ATCC 13124 / DSM 756 / JCM 1290 / NCIMB 6125 / NCTC 8237 / Type A) protein is V-type ATP synthase subunit E.